A 596-amino-acid polypeptide reads, in one-letter code: ATP-dependent RNA helicase dbp3 (596 aa).

Residues Met1–Tyr17 show a composition bias toward basic and acidic residues. Disordered stretches follow at residues Met1–Ser87 and Glu115–Thr139. The span at Ser21 to Arg30 shows a compositional bias: basic residues. Positions Ile47–Ile120 form a coiled coil. Residues Ser123–Thr139 are compositionally biased toward polar residues. The Q motif signature appears at Ile180–Ala207. One can recognise a Helicase ATP-binding domain in the interval Trp210–Ile386. Ala223–Thr230 is an ATP binding site. The short motif at Asp332–Asp335 is the DEAD box element. The Helicase C-terminal domain occupies Arg417–Gly566.

This sequence belongs to the DEAD box helicase family. DDX5/DBP2 subfamily.

Its subcellular location is the nucleus. The protein localises to the nucleolus. The catalysed reaction is ATP + H2O = ADP + phosphate + H(+). Functionally, ATP-dependent RNA helicase required for 60S ribosomal subunit synthesis. Involved in efficient pre-rRNA processing, predominantly at site A3, which is necessary for the normal formation of 25S and 5.8S rRNAs. The protein is ATP-dependent RNA helicase dbp3 (dbp3) of Sclerotinia sclerotiorum (strain ATCC 18683 / 1980 / Ss-1) (White mold).